Here is a 202-residue protein sequence, read N- to C-terminus: Probable septum site-determining protein MinC (202 aa).

This sequence belongs to the MinC family. As to quaternary structure, interacts with MinD and FtsZ.

Cell division inhibitor that blocks the formation of polar Z ring septums. Rapidly oscillates between the poles of the cell to destabilize FtsZ filaments that have formed before they mature into polar Z rings. Prevents FtsZ polymerization. This chain is Probable septum site-determining protein MinC, found in Dictyoglomus turgidum (strain DSM 6724 / Z-1310).